We begin with the raw amino-acid sequence, 554 residues long: MFS-type transporter tstD (554 aa).

2 stretches are compositionally biased toward polar residues: residues 1-10 (MPEPFNSTMP) and 27-38 (QDSNQPPEMSAS). Residues 1 to 68 (MPEPFNSTMP…ESENNEPYSV (68 aa)) form a disordered region. An N-linked (GlcNAc...) asparagine glycan is attached at N6. Basic and acidic residues predominate over residues 39 to 48 (SEKKHPENEN). A helical transmembrane segment spans residues 76-96 (LMVLAASLAGFFSPLSASIYY). N-linked (GlcNAc...) asparagine glycosylation is found at N107 and N114. The next 5 helical transmembrane spans lie at 115–135 (LTVT…ASFS), 142–162 (PGYA…ALQN), 173–193 (LQSA…SDII), 202–222 (IAFA…IGGL), and 231–251 (WIFW…FLFF). The segment at 281 to 300 (KEKQRQQRAENEEENANRQR) is disordered. Helical transmembrane passes span 311–331 (VFVV…GVAF), 354–374 (IKVA…ALST), and 413–433 (IALP…WLMT). N-linked (GlcNAc...) asparagine glycosylation is present at N437. A run of 3 helical transmembrane segments spans residues 442 to 462 (IILL…LNVL), 473 to 493 (MVTA…AAMI), and 504 to 524 (WSYT…LLTM).

This sequence belongs to the major facilitator superfamily.

It is found in the membrane. In terms of biological role, MFS-type transporter; part of the gene cluster that mediates the biosynthesis of the antihypercholesterolemic agents phomoidrides which are dimeric anhydrides. In Talaromyces stipitatus (strain ATCC 10500 / CBS 375.48 / QM 6759 / NRRL 1006) (Penicillium stipitatum), this protein is MFS-type transporter tstD.